The primary structure comprises 412 residues: Peptidase T (412 aa).

Residue His84 coordinates Zn(2+). Asp86 is a catalytic residue. Asp146 contacts Zn(2+). Glu179 functions as the Proton acceptor in the catalytic mechanism. Zn(2+) contacts are provided by Glu180, Asp202, and His385.

This sequence belongs to the peptidase M20B family. Zn(2+) serves as cofactor.

It is found in the cytoplasm. It carries out the reaction Release of the N-terminal residue from a tripeptide.. Its function is as follows. Cleaves the N-terminal amino acid of tripeptides. The protein is Peptidase T of Haemophilus influenzae (strain PittGG).